Here is a 326-residue protein sequence, read N- to C-terminus: Dolichyl-phosphate beta-glucosyltransferase (326 aa).

Residues 1–7 are Lumenal-facing; that stretch reads MWTCLCQ. A helical membrane pass occupies residues 8–28; that stretch reads LCFYLLSTLAVAALSIAALVL. The Cytoplasmic segment spans residues 29-326; that stretch reads YKTKPYPNIK…RIASIQKKEK (298 aa).

This sequence belongs to the glycosyltransferase 2 family.

It is found in the endoplasmic reticulum membrane. It carries out the reaction a di-trans,poly-cis-dolichyl phosphate + UDP-alpha-D-glucose = a di-trans,poly-cis-dolichyl beta-D-glucosyl phosphate + UDP. The protein operates within protein modification; protein glycosylation. Functionally, required for normal production of N-glycosylated proteins in the endoplasmic reticulum (ER). Required for embryonic segmentation, dorsal-ventral patterning and gastrulation. Required for chitin orientation and shaping of the apical and lateral plasma membranes of epidermal cells during cuticle differentiation. Also required for correctly shaping apical membrane topology of the epithelia of other organs such as the midgut and the hindgut. The sequence is that of Dolichyl-phosphate beta-glucosyltransferase (wol) from Drosophila melanogaster (Fruit fly).